We begin with the raw amino-acid sequence, 239 residues long: Ribosomal RNA small subunit methyltransferase G (239 aa).

Residues Gly77, Phe82, 128-129 (AE), and Arg146 each bind S-adenosyl-L-methionine. A disordered region spans residues 216 to 239 (KRRQTSKKYPRKPGTPNKSPLVES).

This sequence belongs to the methyltransferase superfamily. RNA methyltransferase RsmG family.

The protein localises to the cytoplasm. Specifically methylates the N7 position of guanine in position 535 of 16S rRNA. The chain is Ribosomal RNA small subunit methyltransferase G from Staphylococcus epidermidis (strain ATCC 35984 / DSM 28319 / BCRC 17069 / CCUG 31568 / BM 3577 / RP62A).